Consider the following 211-residue polypeptide: Adenylyl-sulfate kinase (211 aa).

36–43 (GLSGSGKS) provides a ligand contact to ATP. The active-site Phosphoserine intermediate is Ser-110.

It belongs to the APS kinase family.

It catalyses the reaction adenosine 5'-phosphosulfate + ATP = 3'-phosphoadenylyl sulfate + ADP + H(+). It participates in sulfur metabolism; hydrogen sulfide biosynthesis; sulfite from sulfate: step 2/3. In terms of biological role, catalyzes the synthesis of activated sulfate. The sequence is that of Adenylyl-sulfate kinase (cysC) from Buchnera aphidicola subsp. Schizaphis graminum (strain Sg).